The primary structure comprises 353 residues: Forkhead box protein I3-A (353 aa).

A DNA-binding region (fork-head) is located at residues 116–210 (RPPYSYSALI…DNGNFRRKRK (95 aa)). A disordered region spans residues 201 to 255 (DNGNFRRKRKRKSDSLAEEEGKGYSGSDSALSSPKNPSDSSERGNSPISTDQAPC). The Nuclear localization signal motif lies at 206–212 (RRKRKRK). Over residues 213–222 (SDSLAEEEGK) the composition is skewed to basic and acidic residues. Polar residues predominate over residues 226–252 (GSDSALSSPKNPSDSSERGNSPISTDQ).

In terms of tissue distribution, expressed in ionocyte precursors.

It localises to the nucleus. Its function is as follows. Transcription factor required for epithelial cell differentiation. Involved in specification of skin ionocytes from epidermal precursors. The protein is Forkhead box protein I3-A of Danio rerio (Zebrafish).